The chain runs to 126 residues: Aspartate 1-decarboxylase (126 aa).

The Schiff-base intermediate with substrate; via pyruvic acid role is filled by S25. A Pyruvic acid (Ser) modification is found at S25. T57 lines the substrate pocket. Residue Y58 is the Proton donor of the active site. 73 to 75 (GGA) serves as a coordination point for substrate.

This sequence belongs to the PanD family. Heterooctamer of four alpha and four beta subunits. It depends on pyruvate as a cofactor. In terms of processing, is synthesized initially as an inactive proenzyme, which is activated by self-cleavage at a specific serine bond to produce a beta-subunit with a hydroxyl group at its C-terminus and an alpha-subunit with a pyruvoyl group at its N-terminus.

Its subcellular location is the cytoplasm. The catalysed reaction is L-aspartate + H(+) = beta-alanine + CO2. It participates in cofactor biosynthesis; (R)-pantothenate biosynthesis; beta-alanine from L-aspartate: step 1/1. Functionally, catalyzes the pyruvoyl-dependent decarboxylation of aspartate to produce beta-alanine. In Acinetobacter baylyi (strain ATCC 33305 / BD413 / ADP1), this protein is Aspartate 1-decarboxylase.